The primary structure comprises 244 residues: Nonsense-mediated decay protein 4 (244 aa).

It localises to the cytoplasm. Functionally, involved in nonsense-mediated decay of mRNAs containing premature stop codons. The sequence is that of Nonsense-mediated decay protein 4 (NMD4) from Candida glabrata (strain ATCC 2001 / BCRC 20586 / JCM 3761 / NBRC 0622 / NRRL Y-65 / CBS 138) (Yeast).